The primary structure comprises 491 residues: MNDHQKNHATSQDDNTKSTPSKNSKHIKIKLWHFILVILGIILLTSIITVVSTILISHQKSGLNKEQRANLKKIEYVYQTLNKDYYKKQSSDKLTQSAIDGMVKELKDPYSEYMTAEETKQFNEGVSGDFVGIGAEMQKKNEQISVTSPMKDSPAEKAGIQPKDIVTQVNHHSVVGKPLDQVVKMVRGKKGTYVTLTIKRGSQEKDIKIKRDTIHVKSVEYEKKGNVGVLTINKFQSNTSGELKSAIIKAHKQGIRHIILDLRNNPGGLLDEAVKMANIFIDKGNTVVQLEKGKDKEELKTSNQALKQAKDMKVSILVNEGSASASEVFTGAMKDYHKAKVYGSKTFGKGIVQTTREFSDGSLIKYTEMKWLTPDGHYIHGKGIRPDVSISTPKYQSLNVIPDNKTYHQGEKDKNVKTMKIGLKALGYPIDNETNIFDEQLESAIKTFQQDNNLKVNGNFDKKTNDKFTEKLVEKANKKDTVLNDLLNKLK.

The tract at residues 1–22 (MNDHQKNHATSQDDNTKSTPSK) is disordered. The segment covering 8–22 (HATSQDDNTKSTPSK) has biased composition (polar residues). Residues 31 to 51 (LWHFILVILGIILLTSIITVV) traverse the membrane as a helical segment. The PDZ domain occupies 119–201 (TKQFNEGVSG…TYVTLTIKRG (83 aa)). Active-site charge relay system residues include Ser324, Asp335, and Lys349.

The protein belongs to the peptidase S41A family.

The protein resides in the cell membrane. This Staphylococcus epidermidis (strain ATCC 12228 / FDA PCI 1200) protein is Probable CtpA-like serine protease.